The sequence spans 33 residues: Thrombin-like enzyme RP34 (33 aa).

A Peptidase S1 domain is found at 1–33 (VIGGDEXDINEHRSLALMYXSWSHRFIXXGXLI).

It belongs to the peptidase S1 family. Snake venom subfamily. In terms of assembly, homodimer. As to expression, expressed by the venom gland.

It is found in the secreted. The catalysed reaction is Selective cleavage of Arg-|-Xaa bond in fibrinogen, to form fibrin, and release fibrinopeptide A. The specificity of further degradation of fibrinogen varies with species origin of the enzyme.. In terms of biological role, thrombin-like snake venom serine protease that displays clotting activity on fibrinogen. Shows both arginine-ester hydrolase and amidase activities on synthetic substrates. Also shows proteolytic activity toward casein. The protein is Thrombin-like enzyme RP34 of Cerastes cerastes (Horned desert viper).